The primary structure comprises 881 residues: Alanine--tRNA ligase (881 aa).

Residues H566, H570, C668, and H672 each coordinate Zn(2+).

The protein belongs to the class-II aminoacyl-tRNA synthetase family. Zn(2+) is required as a cofactor.

The protein localises to the cytoplasm. The catalysed reaction is tRNA(Ala) + L-alanine + ATP = L-alanyl-tRNA(Ala) + AMP + diphosphate. In terms of biological role, catalyzes the attachment of alanine to tRNA(Ala) in a two-step reaction: alanine is first activated by ATP to form Ala-AMP and then transferred to the acceptor end of tRNA(Ala). Also edits incorrectly charged Ser-tRNA(Ala) and Gly-tRNA(Ala) via its editing domain. The chain is Alanine--tRNA ligase from Frankia casuarinae (strain DSM 45818 / CECT 9043 / HFP020203 / CcI3).